Here is an 813-residue protein sequence, read N- to C-terminus: Protein translocase subunit SecA 2 (813 aa).

ATP-binding positions include Gln-105, 123 to 127 (GEGKT), and Asp-525.

It belongs to the SecA family. Monomer and homodimer. Part of the essential Sec protein translocation apparatus which comprises SecA, SecYEG and auxiliary proteins SecDF-YajC and YidC.

It localises to the cell inner membrane. The protein localises to the cytoplasm. The catalysed reaction is ATP + H2O + cellular proteinSide 1 = ADP + phosphate + cellular proteinSide 2.. Functionally, part of the Sec protein translocase complex. Interacts with the SecYEG preprotein conducting channel. Has a central role in coupling the hydrolysis of ATP to the transfer of proteins into and across the cell membrane, serving both as a receptor for the preprotein-SecB complex and as an ATP-driven molecular motor driving the stepwise translocation of polypeptide chains across the membrane. This chain is Protein translocase subunit SecA 2, found in Rhodopseudomonas palustris (strain BisA53).